A 22-amino-acid chain; its full sequence is Chlorophyllase type 1 (22 aa).

The protein belongs to the AB hydrolase superfamily. Lipase family.

It carries out the reaction a chlorophyll + H2O = a chlorophyllide + phytol + H(+). The protein operates within porphyrin-containing compound metabolism; chlorophyll degradation. Functionally, catalyzes the hydrolysis of ester bond in chlorophyll to yield chlorophyllide and phytol. This is Chlorophyllase type 1 from Chenopodium album (Fat hen).